A 448-amino-acid polypeptide reads, in one-letter code: Probable glycine dehydrogenase (decarboxylating) subunit 1 (448 aa).

The protein belongs to the GcvP family. N-terminal subunit subfamily. In terms of assembly, the glycine cleavage system is composed of four proteins: P, T, L and H. In this organism, the P 'protein' is a heterodimer of two subunits.

The enzyme catalyses N(6)-[(R)-lipoyl]-L-lysyl-[glycine-cleavage complex H protein] + glycine + H(+) = N(6)-[(R)-S(8)-aminomethyldihydrolipoyl]-L-lysyl-[glycine-cleavage complex H protein] + CO2. Functionally, the glycine cleavage system catalyzes the degradation of glycine. The P protein binds the alpha-amino group of glycine through its pyridoxal phosphate cofactor; CO(2) is released and the remaining methylamine moiety is then transferred to the lipoamide cofactor of the H protein. This is Probable glycine dehydrogenase (decarboxylating) subunit 1 from Staphylococcus carnosus (strain TM300).